Reading from the N-terminus, the 240-residue chain is Protein unc-119 homolog A (240 aa).

Residues 1–12 (MKVKKGGGGTGS) are compositionally biased toward gly residues. Positions 1–62 (MKVKKGGGGT…PLQGKQPIGP (62 aa)) are disordered. 3 positions are modified to phosphoserine; by CK2: serine 37, serine 39, and serine 41. Residue tyrosine 131 participates in tetradecanoate binding.

This sequence belongs to the PDE6D/unc-119 family. As to quaternary structure, may interact with GTP-bound ARL1. Interacts with ARL2 and ARL3 (GTP-bound forms); this promotes the release of myristoylated cargo proteins. Found in a complex with ARL3, RP2 and UNC119; RP2 induces hydrolysis of GTP ARL3 in the complex, leading to the release of UNC119. Interacts with NPHP3 (when myristoylated). Interacts with CYS1 (when myristoylated). Interacts with MACIR; interaction only takes place when UNC119 is not liganded with myristoylated proteins. Interacts with CABP4; in the absence of calcium. Interacts with DNM1; leading to a decrease of DNM1 GTPase activity. Interacts with LCK; this interaction plays a crucial role in activation of LCK. Interacts with FYN. Interacts with RAB11A; in a cell cycle-dependent manner. Interacts with LYN (via SH2 and SH3 domains); leading to LYN activation. Found in a complex with ABL1, ABL2, CRK and UNC119; leading to the inhibition of CRK phosphorylation by ABL kinases. Interacts with CD44. Interacts with KLHL18 (via kelch repeats). Interacts with PPP3CA, PPP3CB and PPP3CC. Interacts with USP48; this interaction promotes UNC119 stability. Post-translationally, phosphorylation suppresses its interaction with KLHL18 and down-regulates its KLHL18-mediated degradation. Phosphorylated more under light conditions than dark conditions. Dephosphorylated by calcineurin. In terms of tissue distribution, localized in photoreceptor synapses in the outer plexiform layer of the retina.

The protein resides in the cytoplasm. Its subcellular location is the cytoskeleton. It localises to the microtubule organizing center. The protein localises to the centrosome. It is found in the spindle. The protein resides in the spindle pole. In terms of biological role, involved in synaptic functions in photoreceptor cells, the signal transduction in immune cells as a Src family kinase activator, endosome recycling, the uptake of bacteria and endocytosis, protein trafficking in sensory neurons and as lipid-binding chaperone with specificity for a diverse subset of myristoylated proteins. Specifically binds the myristoyl moiety of a subset of N-terminally myristoylated proteins and is required for their localization. Binds myristoylated GNAT1 and is required for G-protein localization and trafficking in sensory neurons. Probably plays a role in trafficking proteins in photoreceptor cells. Plays important roles in mediating Src family kinase signals for the completion of cytokinesis via RAB11A. The sequence is that of Protein unc-119 homolog A (Unc119) from Mus musculus (Mouse).